A 192-amino-acid polypeptide reads, in one-letter code: UPF0149 protein YgfB (192 aa).

The protein belongs to the UPF0149 family.

In Salmonella agona (strain SL483), this protein is UPF0149 protein YgfB.